The following is a 405-amino-acid chain: Probable succinyl-diaminopimelate desuccinylase (405 aa).

Residue histidine 72 coordinates Zn(2+). Residue aspartate 74 is part of the active site. Aspartate 105 contributes to the Zn(2+) binding site. The active-site Proton acceptor is the glutamate 139. Residues glutamate 140, glutamate 165, and histidine 377 each coordinate Zn(2+).

It belongs to the peptidase M20A family. Requires Zn(2+) as cofactor. The cofactor is Co(2+).

It carries out the reaction N-succinyl-(2S,6S)-2,6-diaminopimelate + H2O = (2S,6S)-2,6-diaminopimelate + succinate. Its pathway is amino-acid biosynthesis; L-lysine biosynthesis via DAP pathway; LL-2,6-diaminopimelate from (S)-tetrahydrodipicolinate (succinylase route): step 3/3. This Staphylococcus epidermidis (strain ATCC 12228 / FDA PCI 1200) protein is Probable succinyl-diaminopimelate desuccinylase (dapE).